The primary structure comprises 402 residues: CCA-adding enzyme (402 aa).

Residues Gly-32 and Arg-35 each contribute to the ATP site. Gly-32 and Arg-35 together coordinate CTP. Residues Asp-45 and Asp-47 each contribute to the Mg(2+) site. Positions 119, 162, 165, 168, and 171 each coordinate ATP. 5 residues coordinate CTP: Arg-119, Asp-162, Arg-165, Arg-168, and Arg-171.

Belongs to the tRNA nucleotidyltransferase/poly(A) polymerase family. Bacterial CCA-adding enzyme type 3 subfamily. In terms of assembly, homodimer. Requires Mg(2+) as cofactor.

The enzyme catalyses a tRNA precursor + 2 CTP + ATP = a tRNA with a 3' CCA end + 3 diphosphate. The catalysed reaction is a tRNA with a 3' CCA end + 2 CTP + ATP = a tRNA with a 3' CCACCA end + 3 diphosphate. Its function is as follows. Catalyzes the addition and repair of the essential 3'-terminal CCA sequence in tRNAs without using a nucleic acid template. Adds these three nucleotides in the order of C, C, and A to the tRNA nucleotide-73, using CTP and ATP as substrates and producing inorganic pyrophosphate. tRNA 3'-terminal CCA addition is required both for tRNA processing and repair. Also involved in tRNA surveillance by mediating tandem CCA addition to generate a CCACCA at the 3' terminus of unstable tRNAs. While stable tRNAs receive only 3'-terminal CCA, unstable tRNAs are marked with CCACCA and rapidly degraded. In Lactococcus lactis subsp. cremoris (strain SK11), this protein is CCA-adding enzyme.